Here is a 146-residue protein sequence, read N- to C-terminus: Putative pre-16S rRNA nuclease (146 aa).

Belongs to the YqgF nuclease family.

It is found in the cytoplasm. Could be a nuclease involved in processing of the 5'-end of pre-16S rRNA. This Burkholderia pseudomallei (strain 668) protein is Putative pre-16S rRNA nuclease.